The primary structure comprises 180 residues: Large ribosomal subunit protein uL6 (180 aa).

It belongs to the universal ribosomal protein uL6 family. As to quaternary structure, part of the 50S ribosomal subunit.

Its function is as follows. This protein binds to the 23S rRNA, and is important in its secondary structure. It is located near the subunit interface in the base of the L7/L12 stalk, and near the tRNA binding site of the peptidyltransferase center. The protein is Large ribosomal subunit protein uL6 of Thermodesulfovibrio yellowstonii (strain ATCC 51303 / DSM 11347 / YP87).